Here is a 125-residue protein sequence, read N- to C-terminus: MADLTKLVDELSALTVLEAAELSKLLEEKWGVSAAAPVAVAAAPAAGAAAAPAEEQTEFTVVLAKAGDKKINVIKEIRGITGLGLKEAKDLVEGAPKTVKEGVNKDEAEKIKKLLEDNGASVEVK.

Belongs to the bacterial ribosomal protein bL12 family. As to quaternary structure, homodimer. Part of the ribosomal stalk of the 50S ribosomal subunit. Forms a multimeric L10(L12)X complex, where L10 forms an elongated spine to which 2 to 4 L12 dimers bind in a sequential fashion. Binds GTP-bound translation factors.

Functionally, forms part of the ribosomal stalk which helps the ribosome interact with GTP-bound translation factors. Is thus essential for accurate translation. This Gluconacetobacter diazotrophicus (strain ATCC 49037 / DSM 5601 / CCUG 37298 / CIP 103539 / LMG 7603 / PAl5) protein is Large ribosomal subunit protein bL12.